We begin with the raw amino-acid sequence, 506 residues long: MASPAKQKVVIVGAGPVGCLAALYAAARGDDVELYELRGDLRVPGTIPLNFTKSINLSLSHRGITALRHSGREHVINEILQEVVPIYGRMIHGRDDGKLWEAPQAYDVHGRNNYSADRGMLNNVFLNELERIPNIKLFFNHKLTGADFQANKAWFERRLPGEAPLPGSSGRVPEIEVDFDFLIGADGAHSATRYHMMKFARVDYQQEYIDTLWCEFRIPPSPTNDFLISPSHLHIWPGKEFMFIALPSVDKSFTCTLFAPASHYAQLERSTEDLLQFFDEHFPGVCPQLISPSDLTAQFRANPHLPLISIKCAPHHYSSSVVIVGDAAHAVLPFYGQGLNAGLEDIQVLFDALDKHGVYNANSDQAARALARQSAFAAYTASRTADAHAINDLSRQNYVEMRWGVKQPLYRLRKYIEEALYHYLPSLGWQTQYTRVSFSNQRYSEIIAINRRQGRILGAVFGSTLISVLAVTGIYLWRQPTTRLLSLASFRGALQGALQGALTGTA.

This sequence belongs to the aromatic-ring hydroxylase family. KMO subfamily. The cofactor is FAD.

It localises to the mitochondrion outer membrane. It catalyses the reaction L-kynurenine + NADPH + O2 + H(+) = 3-hydroxy-L-kynurenine + NADP(+) + H2O. It functions in the pathway cofactor biosynthesis; NAD(+) biosynthesis; quinolinate from L-kynurenine: step 1/3. Its function is as follows. Catalyzes the hydroxylation of L-kynurenine (L-Kyn) to form 3-hydroxy-L-kynurenine (L-3OHKyn). Required for synthesis of quinolinic acid. The polypeptide is Kynurenine 3-monooxygenase (bna4) (Emericella nidulans (strain FGSC A4 / ATCC 38163 / CBS 112.46 / NRRL 194 / M139) (Aspergillus nidulans)).